The following is a 210-amino-acid chain: MKTVLLTGFEPFGGETVNPSWEAARQLDGETIAGARVHARLLPCEFGAALDELYRQLDALRPDVAIAVGQAGGRPDIAVERVAINVDDARFPDNAGRQPIDEPVVANGPAAYFATLPIKAIVAGLRERGLPATVSQSAGTFVCNHVMYGLLHRGGPRAGFIHLPFLPEQAIRHPGAFSLKLDDCVAALRLAVELSLTRGKDEKREGGTIH.

Residues Glu-80, Cys-143, and His-162 contribute to the active site.

It belongs to the peptidase C15 family. Homotetramer.

The protein localises to the cytoplasm. The catalysed reaction is Release of an N-terminal pyroglutamyl group from a polypeptide, the second amino acid generally not being Pro.. In terms of biological role, removes 5-oxoproline from various penultimate amino acid residues except L-proline. This is Pyrrolidone-carboxylate peptidase from Chromobacterium violaceum (strain ATCC 12472 / DSM 30191 / JCM 1249 / CCUG 213 / NBRC 12614 / NCIMB 9131 / NCTC 9757 / MK).